A 113-amino-acid polypeptide reads, in one-letter code: Mitochondrial import inner membrane translocase subunit tim16 (113 aa).

Residues 56–108 (KILGLENVETVSKEDIDKKYNELLTINDPKDGGSEYLQIKISGAKHCLHSALK) are J-like.

Belongs to the TIM16/PAM16 family. Probable component of the PAM complex at least composed of a mitochondrial HSP70 protein, grepE, tim16 and tim14. Associates with the TIM23 complex.

It localises to the mitochondrion inner membrane. Functionally, regulates ATP-dependent protein translocation into the mitochondrial matrix. In Dictyostelium discoideum (Social amoeba), this protein is Mitochondrial import inner membrane translocase subunit tim16 (timm16).